Here is a 457-residue protein sequence, read N- to C-terminus: Secreted effector kinase SteC (457 aa).

Residue Lys256 participates in ATP binding.

The protein belongs to the protein kinase superfamily. In terms of processing, autophosphorylated.

It is found in the secreted. The protein localises to the host cytoplasm. In terms of biological role, effector proteins function to alter host cell physiology and promote bacterial survival in host tissues. This protein is a kinase, which is required for SPI-2 T3SS-dependent F-actin meshwork formation in infected host cells. The polypeptide is Secreted effector kinase SteC (steC) (Salmonella typhimurium (strain LT2 / SGSC1412 / ATCC 700720)).